Consider the following 415-residue polypeptide: Gamma-glutamyl phosphate reductase (415 aa).

The protein belongs to the gamma-glutamyl phosphate reductase family.

The protein localises to the cytoplasm. It carries out the reaction L-glutamate 5-semialdehyde + phosphate + NADP(+) = L-glutamyl 5-phosphate + NADPH + H(+). Its pathway is amino-acid biosynthesis; L-proline biosynthesis; L-glutamate 5-semialdehyde from L-glutamate: step 2/2. In terms of biological role, catalyzes the NADPH-dependent reduction of L-glutamate 5-phosphate into L-glutamate 5-semialdehyde and phosphate. The product spontaneously undergoes cyclization to form 1-pyrroline-5-carboxylate. The chain is Gamma-glutamyl phosphate reductase from Clostridium perfringens (strain ATCC 13124 / DSM 756 / JCM 1290 / NCIMB 6125 / NCTC 8237 / Type A).